We begin with the raw amino-acid sequence, 496 residues long: Pituitary adenylate cyclase-activating polypeptide type I receptor (496 aa).

An N-terminal signal peptide occupies residues 1–20; sequence MARTLQLSLTALLLLPMAIA. At 21-152 the chain is on the extracellular side; the sequence is MHSDCIFKKE…SGDQDYYYLS (132 aa). Cystine bridges form between cysteine 34/cysteine 63, cysteine 54/cysteine 118, and cysteine 77/cysteine 134. N-linked (GlcNAc...) asparagine glycans are attached at residues asparagine 48, asparagine 60, and asparagine 117. The important for ADCYAP1/PACAP ligand binding and specificity stretch occupies residues 125–139; that stretch reads EPFPHYFDACGFDDY. Residues 125–139 are important for ligand binding and specificity; sequence EPFPHYFDACGFDDY. The helical transmembrane segment at 153–177 threads the bilayer; it reads VKALYTVGYSTSLVTLTTAMVILCR. At 178–187 the chain is on the cytoplasmic side; sequence FRKLHCTRNF. Residues 188–208 form a helical membrane-spanning segment; sequence IHMNLFVSFMLRAISVFIKDW. Residues 209–223 are Extracellular-facing; sequence ILYAEQDSSHCFVST. The chain crosses the membrane as a helical span at residues 224 to 249; sequence VECKAVMVFFHYCVVSNYFWLFIEGL. A disulfide bridge links cysteine 226 with cysteine 296. The Cytoplasmic portion of the chain corresponds to 250–267; it reads YLFTLLVETFFPERRYFY. A helical transmembrane segment spans residues 268 to 290; the sequence is WYTIIGWGTPTVCVTVWAVLRLY. Over 291 to 302 the chain is Extracellular; the sequence is FDDAGCWDMNDS. Residues 303–329 traverse the membrane as a helical segment; it reads TALWWVIKGPVVGSIMVNFVLFIGIII. At 330 to 347 the chain is on the cytoplasmic side; it reads ILVQKLQSPDMGGNESSI. A helical membrane pass occupies residues 348 to 402; the sequence is YFSCVQKCYCKPQRAQQHSCKMSELSTITLRLARSTLLLIPLFGIHYTVFAFSPE. Topologically, residues 403 to 407 are extracellular; the sequence is NVSKR. The chain crosses the membrane as a helical span at residues 408–431; that stretch reads ERLVFELGLGSFQGFVVAVLYCFL. Over 432-496 the chain is Cytoplasmic; sequence NGEVQAEIKR…SSLPADNLAT (65 aa). 2 positions are modified to phosphoserine: serine 462 and serine 475.

The protein belongs to the G-protein coupled receptor 2 family. In terms of assembly, interacts with maxadilan, a vasodilator peptide from Lutzomyia longipalpis saliva; the interaction results in ADCYAP1R1 activation.

Its subcellular location is the cell membrane. Functionally, g protein-coupled receptor activated by the neuropeptide pituitary adenylate cyclase-activating polypeptide (ADCYAP1/PACAP). Binds both PACAP27 and PACAP38 bioactive peptides. Ligand binding causes a conformation change that triggers signaling via guanine nucleotide-binding proteins (G proteins) and modulates the activity of downstream effectors. Activates cAMP-dependent pathway. May regulate the release of adrenocorticotropin, luteinizing hormone, growth hormone, prolactin, epinephrine, and catecholamine. May play a role in spermatogenesis and sperm motility. Causes smooth muscle relaxation and secretion in the gastrointestinal tract. The chain is Pituitary adenylate cyclase-activating polypeptide type I receptor from Mus musculus (Mouse).